The following is a 356-amino-acid chain: D-xylulose reductase (356 aa).

Positions 44, 69, and 155 each coordinate Zn(2+). 179–184 (GAGPIG) is an NAD(+) binding site.

The protein belongs to the zinc-containing alcohol dehydrogenase family. Zn(2+) is required as a cofactor.

The catalysed reaction is xylitol + NAD(+) = D-xylulose + NADH + H(+). Its pathway is carbohydrate degradation; L-arabinose degradation via L-arabinitol; D-xylulose 5-phosphate from L-arabinose (fungal route): step 4/5. This is D-xylulose reductase (XYL2) from Saccharomyces cerevisiae (strain ATCC 204508 / S288c) (Baker's yeast).